A 284-amino-acid polypeptide reads, in one-letter code: uncharacterized protein (284 aa).

The next 3 helical transmembrane spans lie at 174-194 (LFVL…YISI), 217-237 (MLIP…PGTA), and 241-261 (LIVL…SGSC).

The protein resides in the membrane. This is an uncharacterized protein from Saccharomyces cerevisiae (strain ATCC 204508 / S288c) (Baker's yeast).